The primary structure comprises 192 residues: Crossover junction endodeoxyribonuclease RuvC (192 aa).

Residues Asp7, Glu67, and Asp140 contribute to the active site. The Mg(2+) site is built by Asp7, Glu67, and Asp140. The segment at Arg158–Ser192 is disordered. Over residues Val182–Ser192 the composition is skewed to polar residues.

The protein belongs to the RuvC family. Homodimer which binds Holliday junction (HJ) DNA. The HJ becomes 2-fold symmetrical on binding to RuvC with unstacked arms; it has a different conformation from HJ DNA in complex with RuvA. In the full resolvosome a probable DNA-RuvA(4)-RuvB(12)-RuvC(2) complex forms which resolves the HJ. It depends on Mg(2+) as a cofactor.

It is found in the cytoplasm. It carries out the reaction Endonucleolytic cleavage at a junction such as a reciprocal single-stranded crossover between two homologous DNA duplexes (Holliday junction).. In terms of biological role, the RuvA-RuvB-RuvC complex processes Holliday junction (HJ) DNA during genetic recombination and DNA repair. Endonuclease that resolves HJ intermediates. Cleaves cruciform DNA by making single-stranded nicks across the HJ at symmetrical positions within the homologous arms, yielding a 5'-phosphate and a 3'-hydroxyl group; requires a central core of homology in the junction. The consensus cleavage sequence is 5'-(A/T)TT(C/G)-3'. Cleavage occurs on the 3'-side of the TT dinucleotide at the point of strand exchange. HJ branch migration catalyzed by RuvA-RuvB allows RuvC to scan DNA until it finds its consensus sequence, where it cleaves and resolves the cruciform DNA. This is Crossover junction endodeoxyribonuclease RuvC from Chlorobium chlorochromatii (strain CaD3).